The following is a 427-amino-acid chain: Adenylosuccinate synthetase (427 aa).

Residues 12–18 (GDEGKGK) and 40–42 (GHT) contribute to the GTP site. Residue aspartate 13 is the Proton acceptor of the active site. Residues aspartate 13 and glycine 40 each coordinate Mg(2+). Residues 13-16 (DEGK), 38-41 (NAGH), threonine 128, arginine 142, glutamine 223, threonine 238, and arginine 302 contribute to the IMP site. Histidine 41 (proton donor) is an active-site residue. Substrate is bound at residue 298-304 (VTTGRDR). GTP-binding positions include arginine 304, 330 to 332 (KLD), and 412 to 414 (GVG).

Belongs to the adenylosuccinate synthetase family. As to quaternary structure, homodimer. It depends on Mg(2+) as a cofactor.

It is found in the cytoplasm. It catalyses the reaction IMP + L-aspartate + GTP = N(6)-(1,2-dicarboxyethyl)-AMP + GDP + phosphate + 2 H(+). It participates in purine metabolism; AMP biosynthesis via de novo pathway; AMP from IMP: step 1/2. In terms of biological role, plays an important role in the de novo pathway of purine nucleotide biosynthesis. Catalyzes the first committed step in the biosynthesis of AMP from IMP. The polypeptide is Adenylosuccinate synthetase (Streptomyces coelicolor (strain ATCC BAA-471 / A3(2) / M145)).